Consider the following 352-residue polypeptide: Phosphoribosylformylglycinamidine cyclo-ligase (352 aa).

It belongs to the AIR synthase family.

It localises to the cytoplasm. The enzyme catalyses 2-formamido-N(1)-(5-O-phospho-beta-D-ribosyl)acetamidine + ATP = 5-amino-1-(5-phospho-beta-D-ribosyl)imidazole + ADP + phosphate + H(+). Its pathway is purine metabolism; IMP biosynthesis via de novo pathway; 5-amino-1-(5-phospho-D-ribosyl)imidazole from N(2)-formyl-N(1)-(5-phospho-D-ribosyl)glycinamide: step 2/2. This Saccharophagus degradans (strain 2-40 / ATCC 43961 / DSM 17024) protein is Phosphoribosylformylglycinamidine cyclo-ligase.